The following is a 224-amino-acid chain: 7-cyano-7-deazaguanine synthase (224 aa).

10-20 provides a ligand contact to ATP; it reads LSGGLDSATVV. Zn(2+)-binding residues include cysteine 189, cysteine 199, cysteine 202, and cysteine 205.

It belongs to the QueC family. Zn(2+) is required as a cofactor.

It carries out the reaction 7-carboxy-7-deazaguanine + NH4(+) + ATP = 7-cyano-7-deazaguanine + ADP + phosphate + H2O + H(+). It functions in the pathway purine metabolism; 7-cyano-7-deazaguanine biosynthesis. Its function is as follows. Catalyzes the ATP-dependent conversion of 7-carboxy-7-deazaguanine (CDG) to 7-cyano-7-deazaguanine (preQ(0)). This Pseudomonas putida (strain W619) protein is 7-cyano-7-deazaguanine synthase.